The chain runs to 131 residues: Profilin-2 (131 aa).

The protein belongs to the profilin family. As to quaternary structure, occurs in many kinds of cells as a complex with monomeric actin in a 1:1 ratio.

The protein resides in the cytoplasm. It is found in the cytoskeleton. Its function is as follows. Binds to actin and affects the structure of the cytoskeleton. At high concentrations, profilin prevents the polymerization of actin, whereas it enhances it at low concentrations. By binding to PIP2, it inhibits the formation of IP3 and DG. In Triticum aestivum (Wheat), this protein is Profilin-2 (PRO2).